The chain runs to 308 residues: Ribosomal RNA small subunit methyltransferase H (308 aa).

Residues 32-34 (GGH), D51, F78, D99, and Q106 each bind S-adenosyl-L-methionine.

This sequence belongs to the methyltransferase superfamily. RsmH family.

Its subcellular location is the cytoplasm. It carries out the reaction cytidine(1402) in 16S rRNA + S-adenosyl-L-methionine = N(4)-methylcytidine(1402) in 16S rRNA + S-adenosyl-L-homocysteine + H(+). Specifically methylates the N4 position of cytidine in position 1402 (C1402) of 16S rRNA. The protein is Ribosomal RNA small subunit methyltransferase H of Campylobacter curvus (strain 525.92).